Consider the following 615-residue polypeptide: Deoxyribodipyrimidine photo-lyase (615 aa).

The interval 1-53 (MAPSKRKASAPPQTSHVNGNPSADKKRKTTTDAPPTNPNTSSDPLRAPHPFYK) is disordered. Over residues 11–21 (PPQTSHVNGNP) the composition is skewed to polar residues. The span at 31–40 (TDAPPTNPNT) shows a compositional bias: low complexity. The Photolyase/cryptochrome alpha/beta domain maps to 108–249 (QAVVHWFKMD…AADVVHDTCV (142 aa)). Y352 contacts FAD. R356 is a binding site for DNA. 364–368 (TSNLS) serves as a coordination point for FAD. Interaction with DNA regions lie at residues 407-414 (EVAWRDFY) and 474-475 (NR). Position 505–507 (505–507 (DGD)) interacts with FAD. A DNA-binding site is contributed by Q537.

Belongs to the DNA photolyase class-1 family. In terms of assembly, monomer. FAD is required as a cofactor. Requires (6R)-5,10-methylene-5,6,7,8-tetrahydrofolate as cofactor.

It catalyses the reaction cyclobutadipyrimidine (in DNA) = 2 pyrimidine residues (in DNA).. Functionally, involved in repair of UV radiation-induced DNA damage. Catalyzes the light-dependent monomerization (300-600 nm) of cyclobutyl pyrimidine dimers (in cis-syn configuration), which are formed between adjacent bases on the same DNA strand upon exposure to ultraviolet radiation. The chain is Deoxyribodipyrimidine photo-lyase (phr) from Neurospora crassa (strain ATCC 24698 / 74-OR23-1A / CBS 708.71 / DSM 1257 / FGSC 987).